Consider the following 251-residue polypeptide: Large ribosomal subunit protein uL16m (251 aa).

The transit peptide at M1–G29 directs the protein to the mitochondrion.

Belongs to the universal ribosomal protein uL16 family. As to quaternary structure, component of the mitochondrial ribosome large subunit (39S) which comprises a 16S rRNA and about 50 distinct proteins.

The protein localises to the mitochondrion. The chain is Large ribosomal subunit protein uL16m (Mrpl16) from Mus musculus (Mouse).